A 514-amino-acid polypeptide reads, in one-letter code: Serine/threonine-protein kinase 33 (514 aa).

Basic and acidic residues predominate over residues 65 to 86 (INRDITSRKDLPSRTSNVERKA). Positions 65–91 (INRDITSRKDLPSRTSNVERKASQQQW) are disordered. The 266-residue stretch at 116–381 (YTFGRILGKG…AKELLDNQWL (266 aa)) folds into the Protein kinase domain. ATP contacts are provided by residues 122–130 (LGKGSFGIV) and Lys145. Asp238 serves as the catalytic Proton acceptor. 2 disordered regions span residues 402–468 (KNNP…DMCS) and 485–514 (MEKT…KKKL). Ser407 bears the Phosphoserine mark. Basic and acidic residues predominate over residues 413 to 426 (TEEKNKPSTEEKLK). Residues 449 to 468 (STAYEKQFPATSKDNFDMCS) show a composition bias toward polar residues.

It belongs to the protein kinase superfamily. CAMK Ser/Thr protein kinase family. CaMK subfamily. Homodimer. In terms of processing, autophosphorylated. As to expression, highly expressed in testis, fetal lung and heart, followed by pituitary gland, kidney, interventricular septum, pancreas, heart, trachea, thyroid gland and uterus. Weak hybridization signals were observed in the following tissues: amygdala, aorta, esophagus, colon ascending, colon transverse, skeletal muscle, spleen, peripheral blood leukocyte, lymph node, bone marrow, placenta, prostate, liver, salivary gland, mammary gland, some tumor cell lines, fetal brain, fetal liver, fetal spleen and fetal thymus. No signal at all was detectable in RNA from tissues of the nervous system.

The protein localises to the cytoplasm. Its subcellular location is the cytoskeleton. The protein resides in the perinuclear region. The catalysed reaction is L-seryl-[protein] + ATP = O-phospho-L-seryl-[protein] + ADP + H(+). The enzyme catalyses L-threonyl-[protein] + ATP = O-phospho-L-threonyl-[protein] + ADP + H(+). Specifically inhibited by CDD-2807 ((3-([1,1'-Biphenyl]-2-ylethynyl)-1H-indazol-5-yl)(2,6-diazaspiro[3.5]nonan-2-yl)methanone). Functionally, serine/threonine protein kinase required for spermatid differentiation and male fertility. Promotes sperm flagella assembly during spermatogenesis by mediating phosphorylation of fibrous sheath proteins AKAP3 and AKAP4. Also phosphorylates vimentin/VIM, thereby regulating the dynamic behavior of the intermediate filament cytoskeleton. This chain is Serine/threonine-protein kinase 33, found in Homo sapiens (Human).